Here is a 341-residue protein sequence, read N- to C-terminus: DnaJ homolog subfamily C member 22 (341 aa).

The region spanning 3–50 (KGLLVTYALWAVGGPAGLHHLYLGRDSHALLWMLTLGGGGLGWLWEFW) is the TM2 domain. The next 7 membrane-spanning stretches (helical) occupy residues 5–25 (LLVT…HLYL), 30–50 (HALL…WEFW), 81–101 (FAAQ…SLSS), 105–125 (FYIV…AAVG), 135–155 (LGAA…ILPI), 185–205 (LGLA…CNTA), and 218–238 (FLNW…VLLL). One can recognise a J domain in the interval 277–341 (LAYQVLGLSE…QPRKPRGSRR (65 aa)).

It is found in the membrane. Functionally, may function as a co-chaperone. This is DnaJ homolog subfamily C member 22 (DNAJC22) from Pongo abelii (Sumatran orangutan).